The sequence spans 600 residues: Aspartate--tRNA(Asp/Asn) ligase (600 aa).

E175 serves as a coordination point for L-aspartate. An aspartate region spans residues 199–202; it reads QLFK. R221 contacts L-aspartate. Residues 221 to 223 and Q230 contribute to the ATP site; that span reads RDE. H453 provides a ligand contact to L-aspartate. An ATP-binding site is contributed by E487. L-aspartate is bound at residue R494. 539 to 542 lines the ATP pocket; that stretch reads GWDR. Residues 578–600 are disordered; sequence AAQRKESGIDFKPKKGPQGQKEK. Basic and acidic residues predominate over residues 580 to 590; sequence QRKESGIDFKP.

The protein belongs to the class-II aminoacyl-tRNA synthetase family. Type 1 subfamily. In terms of assembly, homodimer.

Its subcellular location is the cytoplasm. The enzyme catalyses tRNA(Asx) + L-aspartate + ATP = L-aspartyl-tRNA(Asx) + AMP + diphosphate. In terms of biological role, aspartyl-tRNA synthetase with relaxed tRNA specificity since it is able to aspartylate not only its cognate tRNA(Asp) but also tRNA(Asn). Reaction proceeds in two steps: L-aspartate is first activated by ATP to form Asp-AMP and then transferred to the acceptor end of tRNA(Asp/Asn). This is Aspartate--tRNA(Asp/Asn) ligase from Corynebacterium jeikeium (strain K411).